The sequence spans 213 residues: 3,4-dihydroxy-2-butanone 4-phosphate synthase (213 aa).

Residues Arg37–Glu38, Asp42, Arg150–Thr154, and Glu174 contribute to the D-ribulose 5-phosphate site. Glu38 serves as a coordination point for Mg(2+). His153 contributes to the Mg(2+) binding site.

The protein belongs to the DHBP synthase family. Homodimer. Mg(2+) serves as cofactor. It depends on Mn(2+) as a cofactor.

The catalysed reaction is D-ribulose 5-phosphate = (2S)-2-hydroxy-3-oxobutyl phosphate + formate + H(+). It participates in cofactor biosynthesis; riboflavin biosynthesis; 2-hydroxy-3-oxobutyl phosphate from D-ribulose 5-phosphate: step 1/1. Functionally, catalyzes the conversion of D-ribulose 5-phosphate to formate and 3,4-dihydroxy-2-butanone 4-phosphate. This chain is 3,4-dihydroxy-2-butanone 4-phosphate synthase, found in Buchnera aphidicola subsp. Schizaphis graminum (strain Sg).